Reading from the N-terminus, the 203-residue chain is Guanylate kinase (203 aa).

Positions 4–183 constitute a Guanylate kinase-like domain; that stretch reads GKLFVISAPS…ASTLLKSIIW (180 aa). An ATP-binding site is contributed by 11-18; it reads APSGAGKT.

Belongs to the guanylate kinase family.

The protein localises to the cytoplasm. It carries out the reaction GMP + ATP = GDP + ADP. Essential for recycling GMP and indirectly, cGMP. This Desulfotalea psychrophila (strain LSv54 / DSM 12343) protein is Guanylate kinase.